We begin with the raw amino-acid sequence, 151 residues long: Deoxyuridine 5'-triphosphate nucleotidohydrolase (151 aa).

Substrate contacts are provided by residues Arg70–Gly72, Asn83, Leu87–Asp89, and Met97.

The protein belongs to the dUTPase family. It depends on Mg(2+) as a cofactor.

The catalysed reaction is dUTP + H2O = dUMP + diphosphate + H(+). It participates in pyrimidine metabolism; dUMP biosynthesis; dUMP from dCTP (dUTP route): step 2/2. Its function is as follows. This enzyme is involved in nucleotide metabolism: it produces dUMP, the immediate precursor of thymidine nucleotides and it decreases the intracellular concentration of dUTP so that uracil cannot be incorporated into DNA. This is Deoxyuridine 5'-triphosphate nucleotidohydrolase from Azotobacter vinelandii (strain DJ / ATCC BAA-1303).